We begin with the raw amino-acid sequence, 561 residues long: Efflux pump bfoC (561 aa).

The segment at 1–55 (MSDTARILGGPSASSSRDGGMELNSFTEVSQTNSRSHSTKEEEGQVDDQQRPARE) is disordered. A compositionally biased stretch (polar residues) spans 24–36 (NSFTEVSQTNSRS). A compositionally biased stretch (basic and acidic residues) spans 38–55 (STKEEEGQVDDQQRPARE). Helical transmembrane passes span 59-79 (GVLGGYKLVLVTIGLCFCIFC), 103-123 (DVGWYASAYLLTTCAVTLTFG), 128-148 (FFPIKWVYLSALLIFELGSFI), 164-184 (VAGLGGGGLLSGSLLIISQCV), 194-214 (GFIMSIFAVASVIAPLMGGAF), 222-242 (WCFYINLPFGLVSAVVILFTF), 257-277 (AVGLDPLGTATFLPGIVCLLL), 293-313 (VVALFVLFGVLLVCFIGLQLW), 335-355 (LYGFCLNGAMFTFVYYLPIWF), 378-398 (VVFAIISGVLVSMTGYLGPFM), 425-445 (IGYQVLLGLSIGVGFQVPIFV), 457-477 (TATALMTFIQLLGGAIFVSVA), and 530-550 (VHTFYLAIGLAAASFLAATVI).

It belongs to the major facilitator superfamily. TCR/Tet family.

The protein localises to the cell membrane. Efflux pump; part of the gene cluster that mediates the biosynthesis of bifonsecin B, a dimeric gamma-naphthopyrone. The polypeptide is Efflux pump bfoC (Aspergillus brasiliensis (strain CBS 101740 / IMI 381727 / IBT 21946)).